Here is a 131-residue protein sequence, read N- to C-terminus: Small ribosomal subunit protein uS8 (131 aa).

It belongs to the universal ribosomal protein uS8 family. Part of the 30S ribosomal subunit. Contacts proteins S5 and S12.

Functionally, one of the primary rRNA binding proteins, it binds directly to 16S rRNA central domain where it helps coordinate assembly of the platform of the 30S subunit. The sequence is that of Small ribosomal subunit protein uS8 from Nitrosospira multiformis (strain ATCC 25196 / NCIMB 11849 / C 71).